Consider the following 109-residue polypeptide: T-cell surface glycoprotein CD1b (109 aa).

The N-terminal stretch at 1–18 (MLLLPLLLLAGRFPGGDN) is a signal peptide. N-linked (GlcNAc...) asparagine glycosylation is found at Asn-38 and Asn-75.

In terms of assembly, heterodimer with B2M (beta-2-microglobulin). Interacts with saposin C. In terms of tissue distribution, expressed on cortical thymocytes, on certain T-cell leukemias, and in various other tissues.

The protein localises to the cell membrane. It is found in the endosome membrane. It localises to the lysosome membrane. Its function is as follows. Antigen-presenting protein that binds self and non-self lipid and glycolipid antigens and presents them to T-cell receptors on natural killer T-cells. This chain is T-cell surface glycoprotein CD1b (CD1B), found in Oryctolagus cuniculus (Rabbit).